A 145-amino-acid chain; its full sequence is MIALIQRVTRASVTVEDEVTGEIGPGLLVLLGVEKEDDEQKANRLCERVLGYRIFSDADGKMNLNVQQAGGSVLVVSQFTLAADTERGMRPSFSGGAAPDRAQALYEYFVGRCRQQAINTQTGRFAADMQVELVNDGPVTFWLQV.

The Gly-cisPro motif, important for rejection of L-amino acids motif lies at Gly137 to Pro138.

This sequence belongs to the DTD family. As to quaternary structure, homodimer.

The protein resides in the cytoplasm. The catalysed reaction is glycyl-tRNA(Ala) + H2O = tRNA(Ala) + glycine + H(+). It carries out the reaction a D-aminoacyl-tRNA + H2O = a tRNA + a D-alpha-amino acid + H(+). Its function is as follows. An aminoacyl-tRNA editing enzyme that deacylates mischarged D-aminoacyl-tRNAs. Also deacylates mischarged glycyl-tRNA(Ala), protecting cells against glycine mischarging by AlaRS. Acts via tRNA-based rather than protein-based catalysis; rejects L-amino acids rather than detecting D-amino acids in the active site. By recycling D-aminoacyl-tRNA to D-amino acids and free tRNA molecules, this enzyme counteracts the toxicity associated with the formation of D-aminoacyl-tRNA entities in vivo and helps enforce protein L-homochirality. This chain is D-aminoacyl-tRNA deacylase, found in Salmonella arizonae (strain ATCC BAA-731 / CDC346-86 / RSK2980).